Consider the following 60-residue polypeptide: MFLGMPTLTHEEQQKAVEKIQHLMSEGMSSGEAIQLVAQELREKHTTRESVSIVFDDDND.

It belongs to the UPF0181 family.

The polypeptide is UPF0181 protein PMI1604 (Proteus mirabilis (strain HI4320)).